The chain runs to 156 residues: 6,7-dimethyl-8-ribityllumazine synthase (156 aa).

5-amino-6-(D-ribitylamino)uracil is bound by residues Phe-24, 56-58, and 80-82; these read SFE and AVV. Residue 85 to 86 coordinates (2S)-2-hydroxy-3-oxobutyl phosphate; the sequence is ET. The active-site Proton donor is His-88. A 5-amino-6-(D-ribitylamino)uracil-binding site is contributed by Phe-113. Arg-127 is a (2S)-2-hydroxy-3-oxobutyl phosphate binding site.

The protein belongs to the DMRL synthase family.

The catalysed reaction is (2S)-2-hydroxy-3-oxobutyl phosphate + 5-amino-6-(D-ribitylamino)uracil = 6,7-dimethyl-8-(1-D-ribityl)lumazine + phosphate + 2 H2O + H(+). The protein operates within cofactor biosynthesis; riboflavin biosynthesis; riboflavin from 2-hydroxy-3-oxobutyl phosphate and 5-amino-6-(D-ribitylamino)uracil: step 1/2. Its function is as follows. Catalyzes the formation of 6,7-dimethyl-8-ribityllumazine by condensation of 5-amino-6-(D-ribitylamino)uracil with 3,4-dihydroxy-2-butanone 4-phosphate. This is the penultimate step in the biosynthesis of riboflavin. This is 6,7-dimethyl-8-ribityllumazine synthase from Thermococcus kodakarensis (strain ATCC BAA-918 / JCM 12380 / KOD1) (Pyrococcus kodakaraensis (strain KOD1)).